The sequence spans 377 residues: Putative glutamate--cysteine ligase 2 (377 aa).

This sequence belongs to the glutamate--cysteine ligase type 2 family. YbdK subfamily.

The enzyme catalyses L-cysteine + L-glutamate + ATP = gamma-L-glutamyl-L-cysteine + ADP + phosphate + H(+). Its function is as follows. ATP-dependent carboxylate-amine ligase which exhibits weak glutamate--cysteine ligase activity. In Pseudomonas aeruginosa (strain ATCC 15692 / DSM 22644 / CIP 104116 / JCM 14847 / LMG 12228 / 1C / PRS 101 / PAO1), this protein is Putative glutamate--cysteine ligase 2.